Reading from the N-terminus, the 159-residue chain is Small ribosomal subunit protein uS4 (159 aa).

The S4 RNA-binding domain maps to 106–158 (RRLQTIVYRMGLAKSIYHARQLIVHGHIAIEGRRVTSPGFLVPRELEDKITLV).

It belongs to the universal ribosomal protein uS4 family. In terms of assembly, part of the 30S ribosomal subunit. Contacts protein S5. The interaction surface between S4 and S5 is involved in control of translational fidelity.

In terms of biological role, one of the primary rRNA binding proteins, it binds directly to 16S rRNA where it nucleates assembly of the body of the 30S subunit. Functionally, with S5 and S12 plays an important role in translational accuracy. This chain is Small ribosomal subunit protein uS4, found in Pyrobaculum arsenaticum (strain DSM 13514 / JCM 11321 / PZ6).